A 232-amino-acid chain; its full sequence is Lipoprotein-releasing system ATP-binding protein LolD (232 aa).

The 221-residue stretch at Val11–Leu231 folds into the ABC transporter domain. Ala47–Ser54 provides a ligand contact to ATP.

Belongs to the ABC transporter superfamily. Lipoprotein translocase (TC 3.A.1.125) family. As to quaternary structure, the complex is composed of two ATP-binding proteins (LolD) and two transmembrane proteins (LolC and LolE).

It localises to the cell inner membrane. Part of the ABC transporter complex LolCDE involved in the translocation of mature outer membrane-directed lipoproteins, from the inner membrane to the periplasmic chaperone, LolA. Responsible for the formation of the LolA-lipoprotein complex in an ATP-dependent manner. The sequence is that of Lipoprotein-releasing system ATP-binding protein LolD from Nitrobacter hamburgensis (strain DSM 10229 / NCIMB 13809 / X14).